Reading from the N-terminus, the 2009-residue chain is Rootletin (2009 aa).

2 coiled-coil regions span residues 74–265 (EMAS…VTSD) and 346–438 (ASLH…LRLQ). 5 disordered regions span residues 462 to 519 (ALSD…CSDS), 575 to 594 (RDQT…EAQR), 636 to 665 (ELKR…LERS), 1180 to 1225 (EAQR…ELRS), and 1448 to 1501 (GRVS…EAVR). A compositionally biased stretch (polar residues) spans 463–484 (LSDTESGVQLSSSERTADTSDG). Coiled-coil stretches lie at residues 550-1058 (LGSV…LLAE) and 1091-1439 (LEME…GLRS). The segment covering 577–586 (QTAASAQAQE) has biased composition (low complexity). The span at 656-665 (ARARRELERS) shows a compositional bias: basic and acidic residues. Phosphoserine is present on residues Ser1453, Ser1463, and Ser1469. Tyr1475 carries the post-translational modification Phosphotyrosine. Residues Ser1476, Ser1479, Ser1483, Ser1489, and Ser1568 each carry the phosphoserine modification. Positions 1479–1494 (SQPPSPGLIASPAPPD) are enriched in pro residues. 2 coiled-coil regions span residues 1498-1697 (EAVR…GTLQ) and 1744-1998 (HLQK…RSSA). A disordered region spans residues 1957–2009 (QVQTERTLEARERAHRQRVSGLEEQVSTLKAQLHQELRRSSASVSLPPGTPEK).

It belongs to the rootletin family. As to quaternary structure, homomer. Interacts with KLC3, NEK2 and the N-terminus of CEP250. Interacts with CEP44. In terms of processing, phosphorylated by NEK2 which may regulate its association with centrosomes. As to expression, highest expression detected in photoreceptor cells of retina. Expressed at lower levels in brain, trachea and kidney. Detected in all major ciliated epithelia. During embryonic development, enriched along the apical domains of neuroepithelium in brain ventricular zone, in primordia of retinal pigment epithelia and in neural retina.

Its subcellular location is the cytoplasm. The protein resides in the cytoskeleton. The protein localises to the microtubule organizing center. It localises to the centrosome. It is found in the centriole. Its subcellular location is the cilium basal body. Its function is as follows. Major structural component of the ciliary rootlet, a cytoskeletal-like structure in ciliated cells which originates from the basal body at the proximal end of a cilium and extends proximally toward the cell nucleus. Furthermore, is required for the correct positioning of the cilium basal body relative to the cell nucleus, to allow for ciliogenesis. Contributes to centrosome cohesion before mitosis. This Mus musculus (Mouse) protein is Rootletin.